The sequence spans 230 residues: Transmembrane protein 225 (230 aa).

Residues 1-8 (MMHIPNRS) lie on the Cytoplasmic side of the membrane. Residues 9-29 (IQAANIFFSSGAILLLIVGLI) form a helical membrane-spanning segment. The Extracellular portion of the chain corresponds to 30–71 (MEDWVELIPKVRKDKTTHSPWLGCCPPFWPEESLEVVRRIMR). The chain crosses the membrane as a helical span at residues 72–92 (MTLNISIYLNLIIGLQFSYMI). Residues 93–99 (SQNKCVH) are Cytoplasmic-facing. Residues 100 to 120 (LLVGFLSFFAGCLLFYAIIVY) traverse the membrane as a helical segment. Topologically, residues 121-139 (HHKLNKGQYVYFVNYKTKW) are extracellular. A helical transmembrane segment spans residues 140-160 (IAFTVYLTIALFLTCGIFCFI). Topologically, residues 161 to 230 (QSTNRCECMK…TQARRVTWAL (70 aa)) are cytoplasmic. Residues 224–228 (RRVTW) carry the RVxF motif.

In terms of assembly, interacts (via RVxF motif) with PPP1CC. In terms of tissue distribution, expressed in testis, epididymis and spermatozoa (at protein level). Not expressed in brain, heart, lung, liver, spleen, kidney and skeletal muscle.

Its subcellular location is the cytoplasmic vesicle. It localises to the secretory vesicle. The protein localises to the acrosome membrane. Functionally, probably inhibits protein phosphatase 1 (PP1) in sperm via binding to catalytic subunit PPP1CC. In Mus musculus (Mouse), this protein is Transmembrane protein 225 (Tmem225).